The primary structure comprises 326 residues: Pyruvate dehydrogenase E1 component subunit beta (326 aa).

Glu60 is a thiamine diphosphate binding site. K(+) contacts are provided by Ile113, Ala161, Ile162, and Asn166.

In terms of assembly, heterodimer of an alpha and a beta chain. The cofactor is thiamine diphosphate.

Its subcellular location is the plastid. It localises to the chloroplast. The enzyme catalyses N(6)-[(R)-lipoyl]-L-lysyl-[protein] + pyruvate + H(+) = N(6)-[(R)-S(8)-acetyldihydrolipoyl]-L-lysyl-[protein] + CO2. Functionally, the pyruvate dehydrogenase complex catalyzes the overall conversion of pyruvate to acetyl-CoA and CO(2). It contains multiple copies of three enzymatic components: pyruvate dehydrogenase (E1), dihydrolipoamide acetyltransferase (E2) and lipoamide dehydrogenase (E3). This chain is Pyruvate dehydrogenase E1 component subunit beta (pdhB), found in Chaetosphaeridium globosum (Charophycean green alga).